Consider the following 275-residue polypeptide: Intercellular adhesion molecule 2 (275 aa).

An N-terminal signal peptide occupies residues methionine 1–glutamate 24. Topologically, residues lysine 25–glutamine 223 are extracellular. The 58-residue stretch at lysine 41–lysine 98 folds into the Ig-like C2-type 1 domain. 6 N-linked (GlcNAc...) asparagine glycosylation sites follow: asparagine 47, asparagine 82, asparagine 105, asparagine 153, asparagine 176, and asparagine 187. 2 disulfides stabilise this stretch: cysteine 48–cysteine 91 and cysteine 52–cysteine 95. The Ig-like C2-type 2 domain occupies glycine 127–methionine 197. Residues cysteine 134 and cysteine 190 are joined by a disulfide bond. The chain crosses the membrane as a helical span at residues methionine 224 to phenylalanine 248. The Cytoplasmic segment spans residues glycine 249–proline 275. The segment at histidine 251–proline 275 is required for interaction with EZR, MSN and RDX and co-localization to microvilli.

Belongs to the immunoglobulin superfamily. ICAM family. Interacts with RDX, EZR and MSN.

It is found in the membrane. It localises to the cell projection. Its subcellular location is the microvillus. Functionally, ICAM proteins are ligands for the leukocyte adhesion protein LFA-1 (integrin alpha-L/beta-2). ICAM2 may play a role in lymphocyte recirculation by blocking LFA-1-dependent cell adhesion. It mediates adhesive interactions important for antigen-specific immune response, NK-cell mediated clearance, lymphocyte recirculation, and other cellular interactions important for immune response and surveillance. This chain is Intercellular adhesion molecule 2 (ICAM2), found in Pan troglodytes (Chimpanzee).